A 491-amino-acid chain; its full sequence is MSDSDITFYCLSSILSVLLIFIFILIKRKQAKPKLNLPPGKMGWPFLGETIGYLKPYSATTLGEFMDQHIARYGKIYKSKLFGEPAIVSADAGLNRFILQNEGKLFECSYPRSIGGILGKWSMLVLVGDMHRDMRLISLNFLSHARLRTHLLKEVEKHTRLVISSWKENSTFAAQDEAKKFTFNLMAEHIMSLQPGKIETEKLKKEYVTFMKGVVSAPLNFPGTAYWKALKSRGTILKFIEGKMEERIKRMKEGNENLEEDDLLNWVLKHSNLSTEQILDLILSLLFAGHETSSVSIALAIYFLPGCPQAILQLREEHKEIARAKKQAGETELTWEDYKKMEFTHCVVNETLRLGNVVRFLHRKALKDVRYKGYDIPCGWKVLPVIAAVHLDPLLFDQPQHFNPWRWQNNGNCPNFSGASSNSNNIFLPFGGGPRLCAGSELAKLEMAVFIHHLILNYHWELTDNNDQAFAYPFVDFPKGLQIRVQSHSLI.

Residues 6-26 (ITFYCLSSILSVLLIFIFILI) traverse the membrane as a helical segment. Position 437 (Cys-437) interacts with heme.

Belongs to the cytochrome P450 family. As to expression, mainly expressed in leaves and seed pods and, to a lower extent, in flowers and stems.

The protein localises to the membrane. It catalyses the reaction cholesterol + reduced [NADPH--hemoprotein reductase] + O2 = (22S)-22-hydroxycholesterol + oxidized [NADPH--hemoprotein reductase] + H2O + H(+). It functions in the pathway steroid metabolism; cholesterol metabolism. Functionally, canonical brassinosteroid (BR)-biosynthetic enzyme capable of converting cholesterol to 22S-hydroxycholesterol via sterol-C22 hydroxylation. The protein is Cholesterol 22-monohydroxylase CYP90B51 of Trigonella foenum-graecum (Fenugreek).